A 279-amino-acid polypeptide reads, in one-letter code: Small ribosomal subunit protein uS3 (279 aa).

Residues 17–86 (VDEYFLEKLE…NPQIDVQEVK (70 aa)) enclose the KH type-2 domain. Composition is skewed to low complexity over residues 206–233 (AEKK…STAA) and 241–252 (ESEAAEAVTPEG). A disordered region spans residues 206 to 279 (AEKKSPAAGA…VVKTDGDSQS (74 aa)).

Belongs to the universal ribosomal protein uS3 family. In terms of assembly, part of the 30S ribosomal subunit.

In terms of biological role, binds the lower part of the 30S subunit head. This is Small ribosomal subunit protein uS3 from Methanocella arvoryzae (strain DSM 22066 / NBRC 105507 / MRE50).